The following is a 382-amino-acid chain: Dual-specificity RNA methyltransferase RlmN (382 aa).

Catalysis depends on Glu96, which acts as the Proton acceptor. One can recognise a Radical SAM core domain in the interval 102-342 (QGKRGTLCVS…VRTTRGEDID (241 aa)). A disulfide bridge connects residues Cys109 and Cys345. [4Fe-4S] cluster contacts are provided by Cys116, Cys120, and Cys123. S-adenosyl-L-methionine-binding positions include 170 to 171 (GE), Ser202, 224 to 226 (SLH), and Asn302. The S-methylcysteine intermediate role is filled by Cys345.

Belongs to the radical SAM superfamily. RlmN family. The cofactor is [4Fe-4S] cluster.

The protein resides in the cytoplasm. The catalysed reaction is adenosine(2503) in 23S rRNA + 2 reduced [2Fe-2S]-[ferredoxin] + 2 S-adenosyl-L-methionine = 2-methyladenosine(2503) in 23S rRNA + 5'-deoxyadenosine + L-methionine + 2 oxidized [2Fe-2S]-[ferredoxin] + S-adenosyl-L-homocysteine. It catalyses the reaction adenosine(37) in tRNA + 2 reduced [2Fe-2S]-[ferredoxin] + 2 S-adenosyl-L-methionine = 2-methyladenosine(37) in tRNA + 5'-deoxyadenosine + L-methionine + 2 oxidized [2Fe-2S]-[ferredoxin] + S-adenosyl-L-homocysteine. Its function is as follows. Specifically methylates position 2 of adenine 2503 in 23S rRNA and position 2 of adenine 37 in tRNAs. m2A2503 modification seems to play a crucial role in the proofreading step occurring at the peptidyl transferase center and thus would serve to optimize ribosomal fidelity. The sequence is that of Dual-specificity RNA methyltransferase RlmN from Pseudomonas fluorescens (strain SBW25).